The primary structure comprises 84 residues: Small ribosomal subunit protein bS20 (84 aa).

The segment at 1–25 is disordered; sequence MANIVSNEKTYRHTQKVRKENHAKM.

The protein belongs to the bacterial ribosomal protein bS20 family.

Functionally, binds directly to 16S ribosomal RNA. The chain is Small ribosomal subunit protein bS20 from Ureaplasma parvum serovar 3 (strain ATCC 700970).